We begin with the raw amino-acid sequence, 391 residues long: UPF0229 protein CLH_2838 (391 aa).

2 disordered regions span residues 1 to 23 (MAIFRDRTDKQVDHDRAIEDKRR) and 75 to 107 (VATGTGEEKRGDKIESGSKKAMGKGNKGAGNEE). A compositionally biased stretch (basic and acidic residues) spans 80-92 (GEEKRGDKIESGS).

It belongs to the UPF0229 family.

The polypeptide is UPF0229 protein CLH_2838 (Clostridium botulinum (strain Alaska E43 / Type E3)).